A 207-amino-acid chain; its full sequence is Small ribosomal subunit protein uS4 (207 aa).

The segment at 31-55 is disordered; that stretch reads KCKLDSKPGQHGRTSGARTSDYGTQ. The segment covering 42–53 has biased composition (polar residues); it reads GRTSGARTSDYG. In terms of domain architecture, S4 RNA-binding spans 97 to 160; it reads SRLDNVVYRM…KKQARIVEAL (64 aa).

The protein belongs to the universal ribosomal protein uS4 family. Part of the 30S ribosomal subunit. Contacts protein S5. The interaction surface between S4 and S5 is involved in control of translational fidelity.

Its function is as follows. One of the primary rRNA binding proteins, it binds directly to 16S rRNA where it nucleates assembly of the body of the 30S subunit. With S5 and S12 plays an important role in translational accuracy. The chain is Small ribosomal subunit protein uS4 from Burkholderia thailandensis (strain ATCC 700388 / DSM 13276 / CCUG 48851 / CIP 106301 / E264).